Consider the following 63-residue polypeptide: Large ribosomal subunit protein bL35 (63 aa).

Positions 1 to 22 are disordered; it reads MPKMKTKSGATKRFKKTATGFK.

Belongs to the bacterial ribosomal protein bL35 family.

The protein is Large ribosomal subunit protein bL35 of Marinobacter nauticus (strain ATCC 700491 / DSM 11845 / VT8) (Marinobacter aquaeolei).